We begin with the raw amino-acid sequence, 166 residues long: Ribosome maturation factor RimM (166 aa).

A PRC barrel domain is found at 91-165; sequence DDEFYHADLI…RIVADPPEGL (75 aa).

This sequence belongs to the RimM family. In terms of assembly, binds ribosomal protein uS19.

It is found in the cytoplasm. Functionally, an accessory protein needed during the final step in the assembly of 30S ribosomal subunit, possibly for assembly of the head region. Essential for efficient processing of 16S rRNA. May be needed both before and after RbfA during the maturation of 16S rRNA. It has affinity for free ribosomal 30S subunits but not for 70S ribosomes. The chain is Ribosome maturation factor RimM from Dinoroseobacter shibae (strain DSM 16493 / NCIMB 14021 / DFL 12).